Consider the following 584-residue polypeptide: Interferon regulatory factor 2-binding protein 1 (584 aa).

A disordered region spans residues 60–127; that stretch reads VLPEGRSPGP…SGRLPLPSPA (68 aa). 2 positions are modified to phosphoserine: Ser-66 and Ser-125. Arg-177 bears the Omega-N-methylarginine mark. Residue Ser-186 is modified to Phosphoserine. Residues 197–217 adopt a coiled-coil conformation; the sequence is EKEKQQRNADCLAELNEAMRG. Residue Lys-227 forms a Glycyl lysine isopeptide (Lys-Gly) (interchain with G-Cter in SUMO2) linkage. The segment at 346 to 420 is disordered; sequence PAEALPQQYP…PYSAETPGVP (75 aa). A compositionally biased stretch (pro residues) spans 354–369; that stretch reads YPEPAPAALCGPPPRA. Ser-371, Ser-384, Ser-421, and Ser-436 each carry phosphoserine. The tract at residues 433–495 is disordered; it reads LGHSPKDPGG…VSGGGSGTGA (63 aa). Residue Lys-438 forms a Glycyl lysine isopeptide (Lys-Gly) (interchain with G-Cter in SUMO2) linkage. Residues 449–463 show a composition bias toward low complexity; sequence AGGASPAASSTAQPP. A phosphoserine mark is found at Ser-453 and Ser-457. The segment at 503-550 adopts an RING-type; degenerate zinc-finger fold; it reads CTLCRERLEDTHFVQCPSVPGHKFCFPCSREFIKAQGPAGEVYCPSGD. The interval 503–550 is cys-rich; the sequence is CTLCRERLEDTHFVQCPSVPGHKFCFPCSREFIKAQGPAGEVYCPSGD.

The protein belongs to the IRF2BP family. As to quaternary structure, interacts with IRF2. Part of a corepressor complex containing IRF2 and IRF2BP2. Interacts with JDP2.

The protein resides in the nucleus. It carries out the reaction S-ubiquitinyl-[E2 ubiquitin-conjugating enzyme]-L-cysteine + [acceptor protein]-L-lysine = [E2 ubiquitin-conjugating enzyme]-L-cysteine + N(6)-ubiquitinyl-[acceptor protein]-L-lysine.. Its function is as follows. Acts as a transcriptional corepressor in a IRF2-dependent manner; this repression is not mediated by histone deacetylase activities. May act as an E3 ligase towards JDP2, enhancing its polyubiquitination. Represses ATF2-dependent transcriptional activation. The sequence is that of Interferon regulatory factor 2-binding protein 1 (IRF2BP1) from Homo sapiens (Human).